The chain runs to 404 residues: 4-hydroxy-3-methylbut-2-enyl diphosphate reductase (404 aa).

C66 contributes to the [4Fe-4S] cluster binding site. H96 is a (2E)-4-hydroxy-3-methylbut-2-enyl diphosphate binding site. H96 contacts dimethylallyl diphosphate. H96 provides a ligand contact to isopentenyl diphosphate. C157 lines the [4Fe-4S] cluster pocket. H185 is a binding site for (2E)-4-hydroxy-3-methylbut-2-enyl diphosphate. Position 185 (H185) interacts with dimethylallyl diphosphate. H185 lines the isopentenyl diphosphate pocket. The Proton donor role is filled by E187. T250 provides a ligand contact to (2E)-4-hydroxy-3-methylbut-2-enyl diphosphate. C288 contacts [4Fe-4S] cluster. Positions 317, 318, 319, and 380 each coordinate (2E)-4-hydroxy-3-methylbut-2-enyl diphosphate. Dimethylallyl diphosphate is bound by residues S317, S318, N319, and S380. Isopentenyl diphosphate contacts are provided by S317, S318, N319, and S380.

The protein belongs to the IspH family. The cofactor is [4Fe-4S] cluster.

The enzyme catalyses isopentenyl diphosphate + 2 oxidized [2Fe-2S]-[ferredoxin] + H2O = (2E)-4-hydroxy-3-methylbut-2-enyl diphosphate + 2 reduced [2Fe-2S]-[ferredoxin] + 2 H(+). It carries out the reaction dimethylallyl diphosphate + 2 oxidized [2Fe-2S]-[ferredoxin] + H2O = (2E)-4-hydroxy-3-methylbut-2-enyl diphosphate + 2 reduced [2Fe-2S]-[ferredoxin] + 2 H(+). Its pathway is isoprenoid biosynthesis; dimethylallyl diphosphate biosynthesis; dimethylallyl diphosphate from (2E)-4-hydroxy-3-methylbutenyl diphosphate: step 1/1. It participates in isoprenoid biosynthesis; isopentenyl diphosphate biosynthesis via DXP pathway; isopentenyl diphosphate from 1-deoxy-D-xylulose 5-phosphate: step 6/6. Functionally, catalyzes the conversion of 1-hydroxy-2-methyl-2-(E)-butenyl 4-diphosphate (HMBPP) into a mixture of isopentenyl diphosphate (IPP) and dimethylallyl diphosphate (DMAPP). Acts in the terminal step of the DOXP/MEP pathway for isoprenoid precursor biosynthesis. The chain is 4-hydroxy-3-methylbut-2-enyl diphosphate reductase from Prochlorococcus marinus (strain MIT 9211).